The following is a 71-amino-acid chain: UPF0346 protein SZO_05010 (71 aa).

It belongs to the UPF0346 family.

The chain is UPF0346 protein SZO_05010 from Streptococcus equi subsp. zooepidemicus (strain H70).